The primary structure comprises 488 residues: Ergochrome gene cluster transcriptional regulator CPUR_05433 (488 aa).

A disordered region spans residues 1–29 (MDHSIGGRNCQSGGTTASAPRSTGSDEFP). Residues 9–25 (NCQSGGTTASAPRSTGS) are compositionally biased toward polar residues. The zn(2)-C6 fungal-type DNA-binding region spans 36-63 (CHACSLSKVRCSKEKPSCSRCAKRGVPC).

Its subcellular location is the nucleus. Transcription factor; part of the gene cluster responsible for the typical purple-black color of the ergot sclerotia. The ergochrome gene cluster produces several ergot pigments including the yellow ergochrome secalonic acid and its derivatives, as well as the red anthraquinones endocrocin and clavorubin. The sequence is that of Ergochrome gene cluster transcriptional regulator CPUR_05433 from Claviceps purpurea (strain 20.1) (Ergot fungus).